Consider the following 527-residue polypeptide: Probable protein kinase UbiB (527 aa).

The 405-residue stretch at 123 to 527 (EFNETALASA…AIWLLIYLLS (405 aa)) folds into the Protein kinase domain. ATP is bound by residues 129-137 (LASASIAQV) and K161. D296 serves as the catalytic Proton acceptor. The chain crosses the membrane as a helical span at residues 506-526 (FTSFILGLCTGLAIWLLIYLL).

It belongs to the ABC1 family. UbiB subfamily.

It is found in the cell inner membrane. It functions in the pathway cofactor biosynthesis; ubiquinone biosynthesis [regulation]. Its function is as follows. Is probably a protein kinase regulator of UbiI activity which is involved in aerobic coenzyme Q (ubiquinone) biosynthesis. The sequence is that of Probable protein kinase UbiB from Pasteurella multocida (strain Pm70).